A 393-amino-acid chain; its full sequence is NAD(P)H-quinone oxidoreductase subunit H, chloroplastic (393 aa).

The protein belongs to the complex I 49 kDa subunit family. As to quaternary structure, NDH is composed of at least 16 different subunits, 5 of which are encoded in the nucleus.

The protein localises to the plastid. The protein resides in the chloroplast thylakoid membrane. The enzyme catalyses a plastoquinone + NADH + (n+1) H(+)(in) = a plastoquinol + NAD(+) + n H(+)(out). It carries out the reaction a plastoquinone + NADPH + (n+1) H(+)(in) = a plastoquinol + NADP(+) + n H(+)(out). In terms of biological role, NDH shuttles electrons from NAD(P)H:plastoquinone, via FMN and iron-sulfur (Fe-S) centers, to quinones in the photosynthetic chain and possibly in a chloroplast respiratory chain. The immediate electron acceptor for the enzyme in this species is believed to be plastoquinone. Couples the redox reaction to proton translocation, and thus conserves the redox energy in a proton gradient. This is NAD(P)H-quinone oxidoreductase subunit H, chloroplastic from Barbarea verna (Land cress).